A 313-amino-acid polypeptide reads, in one-letter code: Protein KRE1 (313 aa).

A signal peptide spans Met1 to Ala26. Copy 1 of the repeat occupies Thr72–Thr86. Residues Thr72–Thr141 are 2 X approximate repeats. The disordered stretch occupies residues Pro94–Thr114. Repeat 2 spans residues Thr127–Thr141. The span at Thr147–Ala181 shows a compositional bias: low complexity. The interval Thr147–Val198 is disordered. Residue Asn288 is the site of GPI-anchor amidated asparagine attachment. The propeptide at Glu289–Leu313 is removed in mature form.

It belongs to the KRE1 family. In terms of processing, extensively modified; probably through addition of O-linked mannose residues. Post-translationally, the GPI-anchor is attached to the protein in the endoplasmic reticulum and serves to target the protein to the cell surface. There, the glucosamine-inositol phospholipid moiety is cleaved off and the GPI-modified mannoprotein is covalently attached via its lipidless GPI glycan remnant to the 1,6-beta-glucan of the outer cell wall layer.

The protein resides in the cell membrane. Its subcellular location is the secreted. The protein localises to the cell wall. Its function is as follows. Involved in a late stage of cell wall 1,6-beta-glucan synthesis and assembly. Has a structural, rather than enzymic, function within cell wall 1,6-beta-glucan assembly and architecture, possibly by being involved in covalently cross-linking 1,6-beta-glucans to other cell wall components such as 1,3-beta-glucan, chitin and certain mannoproteins. Acts as the plasma membrane receptor for the yeast K1 viral toxin. The polypeptide is Protein KRE1 (KRE1) (Saccharomyces cerevisiae (strain ATCC 204508 / S288c) (Baker's yeast)).